Consider the following 230-residue polypeptide: Vacuole-localized protein 4 (230 aa).

The N-terminal stretch at 1–19 (MRVSSAIFTIASGIAAVSA) is a signal peptide.

It is found in the vacuole. Vacuolar protein required for aerial conidiation and conidial maturation. Also involved in blastospore production and cell cycle. Plays a vital role in the secretion of Pr1 proteases for cuticular penetration and hence contributes significantly to host infection and virulence. In Beauveria bassiana (strain ARSEF 2860) (White muscardine disease fungus), this protein is Vacuole-localized protein 4.